The sequence spans 153 residues: MYRMQLLSCIALSLALVTNSAPTSSSTKKTQLQLEHLLLDLQMILNGINNYKNPKLTRMLTFKFYMPKKATELKHLQCLEEELKPLEEVLNLAQSKNFHLRPRDLISNINVIVLELKGSETTFMCEYADETATIVEFLNRWITFCQSIISTLT.

The N-terminal stretch at 1-20 (MYRMQLLSCIALSLALVTNS) is a signal peptide. Thr-23 is a glycosylation site (O-linked (GalNAc...) threonine). Cysteines 78 and 125 form a disulfide.

This sequence belongs to the IL-2 family.

Its subcellular location is the secreted. Its function is as follows. Cytokine produced by activated CD4-positive helper T-cells and to a lesser extend activated CD8-positive T-cells and natural killer (NK) cells that plays pivotal roles in the immune response and tolerance. Binds to a receptor complex composed of either the high-affinity trimeric IL-2R (IL2RA/CD25, IL2RB/CD122 and IL2RG/CD132) or the low-affinity dimeric IL-2R (IL2RB and IL2RG). Interaction with the receptor leads to oligomerization and conformation changes in the IL-2R subunits resulting in downstream signaling starting with phosphorylation of JAK1 and JAK3. In turn, JAK1 and JAK3 phosphorylate the receptor to form a docking site leading to the phosphorylation of several substrates including STAT5. This process leads to activation of several pathways including STAT, phosphoinositide-3-kinase/PI3K and mitogen-activated protein kinase/MAPK pathways. Functions as a T-cell growth factor and can increase NK-cell cytolytic activity as well. Promotes strong proliferation of activated B-cells and subsequently immunoglobulin production. Plays a pivotal role in regulating the adaptive immune system by controlling the survival and proliferation of regulatory T-cells, which are required for the maintenance of immune tolerance. Moreover, participates in the differentiation and homeostasis of effector T-cell subsets, including Th1, Th2, Th17 as well as memory CD8-positive T-cells. The chain is Interleukin-2 (IL2) from Homo sapiens (Human).